Consider the following 94-residue polypeptide: Small ribosomal subunit protein bS6 (94 aa).

It belongs to the bacterial ribosomal protein bS6 family.

Binds together with bS18 to 16S ribosomal RNA. The polypeptide is Small ribosomal subunit protein bS6 (Akkermansia muciniphila (strain ATCC BAA-835 / DSM 22959 / JCM 33894 / BCRC 81048 / CCUG 64013 / CIP 107961 / Muc)).